A 418-amino-acid polypeptide reads, in one-letter code: Transcription termination factor Rho (418 aa).

In terms of domain architecture, Rho RNA-BD spans 48 to 123 (SIFGEGTLEV…VKVDKVNGEA (76 aa)). ATP contacts are provided by residues 169 to 174 (GKGQRA), 181 to 186 (KSGKTV), and Arg212.

Belongs to the Rho family. As to quaternary structure, homohexamer. The homohexamer assembles into an open ring structure.

Facilitates transcription termination by a mechanism that involves Rho binding to the nascent RNA, activation of Rho's RNA-dependent ATPase activity, and release of the mRNA from the DNA template. This is Transcription termination factor Rho from Chromobacterium violaceum (strain ATCC 12472 / DSM 30191 / JCM 1249 / CCUG 213 / NBRC 12614 / NCIMB 9131 / NCTC 9757 / MK).